We begin with the raw amino-acid sequence, 181 residues long: Large ribosomal subunit protein uL5 (181 aa).

The protein belongs to the universal ribosomal protein uL5 family. In terms of assembly, part of the 50S ribosomal subunit; part of the 5S rRNA/L5/L18/L25 subcomplex. Contacts the 5S rRNA and the P site tRNA. Forms a bridge to the 30S subunit in the 70S ribosome.

In terms of biological role, this is one of the proteins that bind and probably mediate the attachment of the 5S RNA into the large ribosomal subunit, where it forms part of the central protuberance. In the 70S ribosome it contacts protein S13 of the 30S subunit (bridge B1b), connecting the 2 subunits; this bridge is implicated in subunit movement. Contacts the P site tRNA; the 5S rRNA and some of its associated proteins might help stabilize positioning of ribosome-bound tRNAs. The sequence is that of Large ribosomal subunit protein uL5 from Nitrosococcus oceani (strain ATCC 19707 / BCRC 17464 / JCM 30415 / NCIMB 11848 / C-107).